A 119-amino-acid chain; its full sequence is uncharacterized protein (119 aa).

Residues lysine 86–lysine 119 are disordered. Residues glutamate 95 to glutamate 106 show a composition bias toward acidic residues. Residues proline 110–lysine 119 show a composition bias toward basic residues.

This is an uncharacterized protein from Sputnik virophage.